Reading from the N-terminus, the 400-residue chain is Probable peptidoglycan glycosyltransferase FtsW (400 aa).

Residues 1–24 (MSTGSLPLGLPSRDSLDGLRNSVD) are Cytoplasmic-facing. A helical membrane pass occupies residues 25-45 (LPLLAAAALLLGLGLIMVASA). At 46–63 (SMDLGERYYGNTWHFFQR) the chain is on the periplasmic side. A helical transmembrane segment spans residues 64–84 (QVLFAAIGLALATVMWAIPLE). Over 85–88 (RWER) the chain is Cytoplasmic. Residues 89 to 109 (AGPWLLILVMVLLIAVLLPGV) form a helical membrane-spanning segment. Residues 110 to 118 (GRTVNGATR) are Periplasmic-facing. A helical transmembrane segment spans residues 119 to 139 (WIPIGMFNLQVAEPVKLLVVM). Topologically, residues 140 to 153 (YLAGYIVRHYSALR) are cytoplasmic. A helical transmembrane segment spans residues 154–174 (LHLRGFVRPLVVLGFGTVLLL). Residues 175 to 177 (LQP) lie on the Periplasmic side of the membrane. A helical transmembrane segment spans residues 178-198 (DFGGAAIMLAIGMGMLFLAGA). Lys-199 is a topological domain (cytoplasmic). A helical transmembrane segment spans residues 200–220 (LWQFAALGATIAVGMAFVAVA). The Periplasmic portion of the chain corresponds to 221–278 (APYRVARLTAFLDPWQDPFATGFQLTQSLIAIGSGGWFGTGLGNSVQKLFYLPEAHND). The helical transmembrane segment at 279 to 299 (FLFAVFAEEFGFIGVLALIAL) threads the bilayer. Over 300 to 324 (FAVVVWRCVKIGLWAERAGHAFGSH) the chain is Cytoplasmic. A helical membrane pass occupies residues 325–345 (LAFGVAIWLALQSALNLAVNM). The Periplasmic portion of the chain corresponds to 346-354 (GLLPTKGMT). A helical transmembrane segment spans residues 355–375 (LPFLSYGGSSLIVTLMAIGLV). Residues 376-400 (MRVYREAQIPAPRQSTPPRRKRGQA) are Cytoplasmic-facing.

This sequence belongs to the SEDS family. FtsW subfamily.

The protein localises to the cell inner membrane. It catalyses the reaction [GlcNAc-(1-&gt;4)-Mur2Ac(oyl-L-Ala-gamma-D-Glu-L-Lys-D-Ala-D-Ala)](n)-di-trans,octa-cis-undecaprenyl diphosphate + beta-D-GlcNAc-(1-&gt;4)-Mur2Ac(oyl-L-Ala-gamma-D-Glu-L-Lys-D-Ala-D-Ala)-di-trans,octa-cis-undecaprenyl diphosphate = [GlcNAc-(1-&gt;4)-Mur2Ac(oyl-L-Ala-gamma-D-Glu-L-Lys-D-Ala-D-Ala)](n+1)-di-trans,octa-cis-undecaprenyl diphosphate + di-trans,octa-cis-undecaprenyl diphosphate + H(+). It participates in cell wall biogenesis; peptidoglycan biosynthesis. Functionally, peptidoglycan polymerase that is essential for cell division. This chain is Probable peptidoglycan glycosyltransferase FtsW, found in Thioalkalivibrio sp. (strain K90mix).